The sequence spans 513 residues: Sodium/potassium/calcium exchanger 5 (513 aa).

The signal sequence occupies residues 1-35 (MRTDVFLQRRKRRDVLLSIIALLLLIFAIVHLVFC). Topologically, residues 36 to 78 (AGLSFQGSSSARVRRDLENASECVQPQSSEFPEGFFTVQERKD) are extracellular. Residues 79–99 (GGILIYFMIIFYMLLSVSIVC) traverse the membrane as a helical segment. At 100 to 123 (DEYFLPSLEVISERLGLSQDVAGA) the chain is on the cytoplasmic side. Residues 124-144 (TFMAAGSSAPELVTAFLGVFV) traverse the membrane as a helical segment. At 145 to 148 (TKGD) the chain is on the extracellular side. Residues 149-169 (IGVSTIMGSAVYNLLCICAAC) form a helical membrane-spanning segment. Residues 170 to 181 (GLLSSAVGRLSC) lie on the Cytoplasmic side of the membrane. Residues 182–202 (WPLFRDCVAYAISVAAVIAII) traverse the membrane as a helical segment. Topologically, residues 203-207 (SDNRV) are extracellular. Residues 208–228 (YWYDGACLLLVYGVYVAVLCF) form a helical membrane-spanning segment. Residues 229 to 315 (DLRISEYVMQ…KSVFSMPDHD (87 aa)) are Cytoplasmic-facing. The helical transmembrane segment at 316 to 336 (LKRILWVLSLPVSTLLFVSVP) threads the bilayer. Over 337 to 350 (DCRRPFWKNFYMLT) the chain is Extracellular. A helical transmembrane segment spans residues 351–371 (FLMSAVWISAFTYVLVWMVTI). Over 372-381 (VGETLGIPDT) the chain is Cytoplasmic. A helical transmembrane segment spans residues 382–402 (VMGMTLLAAGTSIPDTVASVM). Residues 403-420 (VAREGKSDMAMSNIVGSN) are Extracellular-facing. Residues 421–441 (VFDMLCLGLPWFIQTVFVDVG) traverse the membrane as a helical segment. The Cytoplasmic segment spans residues 442–450 (SPVEVNSSG). The chain crosses the membrane as a helical span at residues 451–471 (LVFMSCTLLLSIIFLFLAVHI). Residues 472 to 482 (NGWKLDWKLGL) lie on the Extracellular side of the membrane. A helical membrane pass occupies residues 483-503 (VCLACYILFATLSILYELGII). Topologically, residues 504-513 (GNNPIRSCSD) are cytoplasmic.

It belongs to the Ca(2+):cation antiporter (CaCA) (TC 2.A.19) family. SLC24A subfamily. As to expression, highly expressed in melanin-producing cells. Colocalizes with melanin biosynthesis marker dct.

Its subcellular location is the golgi apparatus. It is found in the trans-Golgi network membrane. It localises to the melanosome. The catalysed reaction is Ca(2+)(out) + K(+)(out) + 4 Na(+)(in) = Ca(2+)(in) + K(+)(in) + 4 Na(+)(out). Its function is as follows. Calcium, potassium:sodium antiporter that transports 1 Ca(2+) and 1 K(+) to the melanosome in exchange for 4 cytoplasmic Na(+). Involved in pigmentation, possibly by participating in ion transport in melanosomes. Predominant sodium-calcium exchanger in melanocytes. This chain is Sodium/potassium/calcium exchanger 5 (slc24a5), found in Danio rerio (Zebrafish).